The chain runs to 110 residues: Large ribosomal subunit protein uL22 (110 aa).

It belongs to the universal ribosomal protein uL22 family. Part of the 50S ribosomal subunit.

In terms of biological role, this protein binds specifically to 23S rRNA; its binding is stimulated by other ribosomal proteins, e.g. L4, L17, and L20. It is important during the early stages of 50S assembly. It makes multiple contacts with different domains of the 23S rRNA in the assembled 50S subunit and ribosome. Functionally, the globular domain of the protein is located near the polypeptide exit tunnel on the outside of the subunit, while an extended beta-hairpin is found that lines the wall of the exit tunnel in the center of the 70S ribosome. The chain is Large ribosomal subunit protein uL22 from Pectobacterium atrosepticum (strain SCRI 1043 / ATCC BAA-672) (Erwinia carotovora subsp. atroseptica).